The following is a 351-amino-acid chain: Muscleblind-like protein 2a (351 aa).

4 C3H1-type zinc fingers span residues 13–41, 47–73, 177–205, and 213–239; these read WLTL…HPPK, NGRV…HPPA, TDKL…HPSD, and DNTV…HPPA.

This sequence belongs to the muscleblind family. As to expression, expressed in fast and slow myotomal muscle, heart, liver, skin, brain and testis.

It localises to the nucleus. The protein resides in the cytoplasm. In terms of biological role, involved in pre-mRNA alternative splicing regulation. RNA-binding protein that binds to 5'ACACCC-3' core sequence. The chain is Muscleblind-like protein 2a (mbnl2a) from Takifugu rubripes (Japanese pufferfish).